The sequence spans 343 residues: Tetraacyldisaccharide 4'-kinase (343 aa).

ATP is bound at residue 47–54 (SVGGTGKT).

It belongs to the LpxK family.

The enzyme catalyses a lipid A disaccharide + ATP = a lipid IVA + ADP + H(+). The protein operates within glycolipid biosynthesis; lipid IV(A) biosynthesis; lipid IV(A) from (3R)-3-hydroxytetradecanoyl-[acyl-carrier-protein] and UDP-N-acetyl-alpha-D-glucosamine: step 6/6. In terms of biological role, transfers the gamma-phosphate of ATP to the 4'-position of a tetraacyldisaccharide 1-phosphate intermediate (termed DS-1-P) to form tetraacyldisaccharide 1,4'-bis-phosphate (lipid IVA). This chain is Tetraacyldisaccharide 4'-kinase, found in Flavobacterium psychrophilum (strain ATCC 49511 / DSM 21280 / CIP 103535 / JIP02/86).